The following is a 157-amino-acid chain: Ribosome maturation factor RimM (157 aa).

Residues 89–156 (PGEYYHVDLI…DRLLIDPEFV (68 aa)) form the PRC barrel domain.

This sequence belongs to the RimM family. As to quaternary structure, binds ribosomal protein uS19.

The protein localises to the cytoplasm. Functionally, an accessory protein needed during the final step in the assembly of 30S ribosomal subunit, possibly for assembly of the head region. Essential for efficient processing of 16S rRNA. May be needed both before and after RbfA during the maturation of 16S rRNA. It has affinity for free ribosomal 30S subunits but not for 70S ribosomes. The sequence is that of Ribosome maturation factor RimM from Rhizorhabdus wittichii (strain DSM 6014 / CCUG 31198 / JCM 15750 / NBRC 105917 / EY 4224 / RW1) (Sphingomonas wittichii).